The primary structure comprises 123 residues: MAITKDDILEAVANMSVMEVVELVEAMEEKFGVSAAAVAVAGPAGDAGAAGEEQTEFDVVLTGAGDNKVAAIKAVRGATGLGLKEAKSAVESAPFTLKEGVSKEEAETLANELKEAGIEVEVK.

This sequence belongs to the bacterial ribosomal protein bL12 family. Homodimer. Part of the ribosomal stalk of the 50S ribosomal subunit. Forms a multimeric L10(L12)X complex, where L10 forms an elongated spine to which 2 to 4 L12 dimers bind in a sequential fashion. Binds GTP-bound translation factors.

Its function is as follows. Forms part of the ribosomal stalk which helps the ribosome interact with GTP-bound translation factors. Is thus essential for accurate translation. This chain is Large ribosomal subunit protein bL12, found in Hydrogenovibrio crunogenus (strain DSM 25203 / XCL-2) (Thiomicrospira crunogena).